We begin with the raw amino-acid sequence, 442 residues long: Alpha-1,6-mannosyl-glycoprotein 2-beta-N-acetylglucosaminyltransferase (442 aa).

Over 1–9 (MRFRIYKRK) the chain is Cytoplasmic. Residues 10–29 (VLILTLVVAACGFVLWSSNG) form a helical; Signal-anchor for type II membrane protein membrane-spanning segment. At 30–442 (RQRKNDALAP…ELCKSYRRLQ (413 aa)) the chain is on the lumenal side. Residues Asn64 and Asn81 are each glycosylated (N-linked (GlcNAc...) asparagine). Substrate contacts are provided by residues 118-122 (QVHNR) and Asp149. Residues Cys191 and Cys205 are joined by a disulfide bond. 224–228 (QTKHH) contacts substrate. Asp256 lines the Mn(2+) pocket. Cys278 and Cys281 are oxidised to a cystine. Arg293 contacts substrate. Cystine bridges form between Cys329/Cys352, Cys334/Cys435, and Cys373/Cys381. Position 369 (His369) interacts with Mn(2+).

This sequence belongs to the glycosyltransferase 16 (GT16) protein family. As to quaternary structure, homodimer. Mn(2+) serves as cofactor. Detected in liver (at protein level). Detected in liver, brain, thymus and spleen.

Its subcellular location is the golgi apparatus membrane. It catalyses the reaction an N(4)-{beta-D-GlcNAc-(1-&gt;2)-alpha-D-Man-(1-&gt;3)-[alpha-D-Man-(1-&gt;6)]-beta-D-Man-(1-&gt;4)-beta-D-GlcNAc-(1-&gt;4)-beta-D-GlcNAc}-L-asparaginyl-[protein] + UDP-N-acetyl-alpha-D-glucosamine = N(4)-{beta-D-GlcNAc-(1-&gt;2)-alpha-D-Man-(1-&gt;3)-[beta-D-GlcNAc-(1-&gt;2)-alpha-D-Man-(1-&gt;6)]-beta-D-Man-(1-&gt;4)-beta-D-GlcNAc-(1-&gt;4)-beta-D-GlcNAc}-L-asparaginyl-[protein] + UDP + H(+). Its pathway is protein modification; protein glycosylation. Plays an essential role in protein N-glycosylation. Catalyzes the transfer of N-acetylglucosamine (GlcNAc) onto the free terminal mannose moiety in the core structure of the nascent N-linked glycan chain, giving rise to the second branch in complex glycans. The polypeptide is Alpha-1,6-mannosyl-glycoprotein 2-beta-N-acetylglucosaminyltransferase (Mgat2) (Rattus norvegicus (Rat)).